Consider the following 656-residue polypeptide: CXXC-type zinc finger protein 1 (656 aa).

An N-acetylmethionine modification is found at M1. A compositionally biased stretch (acidic residues) spans M1–G14. A disordered region spans residues M1–E20. S6 and S19 each carry phosphoserine. The PHD-type zinc finger occupies Y28–K76. The disordered stretch occupies residues Y84 to I162. Positions R90–R120 are enriched in basic and acidic residues. The residue at position 124 (S124) is a Phosphoserine. The CXXC-type zinc-finger motif lies at Q160–Q209. Positions 169, 172, 175, 181, 184, 187, 203, and 208 each coordinate Zn(2+). 2 disordered regions span residues F219 to D287 and E311 to P373. At S224 the chain carries Phosphoserine. A Phosphothreonine modification is found at T227. A compositionally biased stretch (low complexity) spans L239 to Q249. K250 is covalently cross-linked (Glycyl lysine isopeptide (Lys-Gly) (interchain with G-Cter in SUMO2)). Basic residues predominate over residues R321–E334. Residues K335 to Y345 are compositionally biased toward basic and acidic residues. A compositionally biased stretch (basic residues) spans K346–W358. A compositionally biased stretch (basic and acidic residues) spans K359–D368. Residues A422–E474 adopt a coiled-coil conformation.

As to quaternary structure, component of the SET1 complex, at least composed of the catalytic subunit (SETD1A or SETD1B), WDR5, WDR82, RBBP5, ASH2L/ASH2, CXXC1/CFP1 HCFC1 and DPY30. Interacts with SETD1A. Interacts with ZNF335. Interacts with PRDM9; this interaction does not link PRDM9-activated recombination hotspot sites with DSB machinery and is not required for the hotspot recognition pathway. Interacts with histone H3K4me3. In terms of processing, may be regulated by proteolysis. In terms of tissue distribution, ubiquitous.

It is found in the nucleus speckle. Its subcellular location is the nucleus. In terms of biological role, transcriptional activator that exhibits a unique DNA binding specificity for CpG unmethylated motifs with a preference for CpGG. The polypeptide is CXXC-type zinc finger protein 1 (CXXC1) (Homo sapiens (Human)).